A 509-amino-acid chain; its full sequence is L-aspartate semialdehyde sulfurtransferase (509 aa).

Cys-133 serves as the catalytic Cysteine persulfide intermediate. CBS domains lie at 394–450 (LSKP…NKKT) and 455–509 (MTRN…GGKK). 3 residues coordinate S-methyl-5'-thioadenosine: Ser-395, Ile-399, and His-421. S-adenosyl-L-methionine contacts are provided by residues Asp-439, Thr-456, Ile-460, and 479–482 (NISG). Residue 497–500 (TSED) participates in S-methyl-5'-thioadenosine binding.

Belongs to the L-aspartate semialdehyde sulfurtransferase family. In terms of assembly, homodimer. May form a complex with MJ0099.

The catalysed reaction is L-aspartate 4-semialdehyde + reduced 2[4Fe-4S]-[ferredoxin] + hydrogen sulfide + 3 H(+) = oxidized 2[4Fe-4S]-[ferredoxin] + L-homocysteine + H2O. It participates in amino-acid biosynthesis. The ligand-induced conformational reorganization of the protein could be an important regulatory mechanism. Required for O-acetylhomoserine sulfhydrylase (OAHS)-independent homocysteine (Hcy) biosynthesis. Together with MJ0099, catalyzes the condensation of sulfide with aspartate semialdehyde to generate homocysteine. Likely functions through persulfide intermediate. The protein is L-aspartate semialdehyde sulfurtransferase of Methanocaldococcus jannaschii (strain ATCC 43067 / DSM 2661 / JAL-1 / JCM 10045 / NBRC 100440) (Methanococcus jannaschii).